The primary structure comprises 85 residues: U4-theraphotoxin-Hhn1j (85 aa).

Residues 1-22 (MKVTLIAILTCAAVLVLHTTAA) form the signal peptide. Positions 23–48 (EELEAESQLMEVGMPDTELAAVDEER) are excised as a propeptide. 3 disulfides stabilise this stretch: Cys52–Cys66, Cys56–Cys77, and Cys71–Cys82.

Belongs to the neurotoxin 12 (Hwtx-2) family. 02 (Hwtx-2) subfamily. As to expression, expressed by the venom gland.

It is found in the secreted. Postsynaptic neurotoxin. The sequence is that of U4-theraphotoxin-Hhn1j from Cyriopagopus hainanus (Chinese bird spider).